The primary structure comprises 761 residues: Polyribonucleotide nucleotidyltransferase (761 aa).

Residues Asp532 and Asp538 each coordinate Mg(2+). The KH domain occupies 598 to 657 (PRVISVQIPVDKIGELIGPKGKTINAIQDETGADISIDEDGTVYIGAVDGPSAEAARAQV). The S1 motif domain occupies 669–741 (GEQFLGTVVK…DRGKLSLAPV (73 aa)).

This sequence belongs to the polyribonucleotide nucleotidyltransferase family. Mg(2+) serves as cofactor.

The protein resides in the cytoplasm. The enzyme catalyses RNA(n+1) + phosphate = RNA(n) + a ribonucleoside 5'-diphosphate. Functionally, involved in mRNA degradation. Catalyzes the phosphorolysis of single-stranded polyribonucleotides processively in the 3'- to 5'-direction. The protein is Polyribonucleotide nucleotidyltransferase of Leifsonia xyli subsp. xyli (strain CTCB07).